Reading from the N-terminus, the 559-residue chain is Formate--tetrahydrofolate ligase (559 aa).

An ATP-binding site is contributed by 68–75 (TPAGEGKT).

Belongs to the formate--tetrahydrofolate ligase family.

The catalysed reaction is (6S)-5,6,7,8-tetrahydrofolate + formate + ATP = (6R)-10-formyltetrahydrofolate + ADP + phosphate. The protein operates within one-carbon metabolism; tetrahydrofolate interconversion. In Moorella thermoacetica (strain ATCC 39073 / JCM 9320), this protein is Formate--tetrahydrofolate ligase.